Reading from the N-terminus, the 298-residue chain is Lipoyl synthase (298 aa).

[4Fe-4S] cluster contacts are provided by Cys40, Cys45, Cys51, Cys67, Cys71, Cys74, and Ser280. The Radical SAM core domain maps to 53 to 269 (AVRRTATFMI…KEIALSKGFT (217 aa)).

The protein belongs to the radical SAM superfamily. Lipoyl synthase family. [4Fe-4S] cluster serves as cofactor.

Its subcellular location is the cytoplasm. It carries out the reaction [[Fe-S] cluster scaffold protein carrying a second [4Fe-4S](2+) cluster] + N(6)-octanoyl-L-lysyl-[protein] + 2 oxidized [2Fe-2S]-[ferredoxin] + 2 S-adenosyl-L-methionine + 4 H(+) = [[Fe-S] cluster scaffold protein] + N(6)-[(R)-dihydrolipoyl]-L-lysyl-[protein] + 4 Fe(3+) + 2 hydrogen sulfide + 2 5'-deoxyadenosine + 2 L-methionine + 2 reduced [2Fe-2S]-[ferredoxin]. The protein operates within protein modification; protein lipoylation via endogenous pathway; protein N(6)-(lipoyl)lysine from octanoyl-[acyl-carrier-protein]. In terms of biological role, catalyzes the radical-mediated insertion of two sulfur atoms into the C-6 and C-8 positions of the octanoyl moiety bound to the lipoyl domains of lipoate-dependent enzymes, thereby converting the octanoylated domains into lipoylated derivatives. This is Lipoyl synthase from Geobacillus sp. (strain WCH70).